The sequence spans 623 residues: Chaperone protein HtpG (623 aa).

The a; substrate-binding stretch occupies residues 1-336 (MSETNTQKAA…TEDLPLNVSR (336 aa)). Residues 337-546 (EMLQATPVLA…DGGPDLTMQR (210 aa)) form a b region. Positions 547–623 (LMRRSGQAMP…ATLLAGPAAE (77 aa)) are c.

The protein belongs to the heat shock protein 90 family. In terms of assembly, homodimer.

The protein resides in the cytoplasm. In terms of biological role, molecular chaperone. Has ATPase activity. This Gluconobacter oxydans (strain 621H) (Gluconobacter suboxydans) protein is Chaperone protein HtpG.